The following is an 82-amino-acid chain: Putative defensin-like protein 134 (82 aa).

Residues 1 to 26 (MEVRSLNLCFLLVLVLLMSPAPTAVA) form the signal peptide. 4 disulfides stabilise this stretch: Cys-32/Cys-79, Cys-42/Cys-68, Cys-47/Cys-74, and Cys-51/Cys-76.

This sequence belongs to the DEFL family.

The protein localises to the secreted. The chain is Putative defensin-like protein 134 from Arabidopsis thaliana (Mouse-ear cress).